Here is a 217-residue protein sequence, read N- to C-terminus: Cytidylate kinase (217 aa).

10–18 (GPAGAGKST) contributes to the ATP binding site.

This sequence belongs to the cytidylate kinase family. Type 1 subfamily.

It is found in the cytoplasm. It catalyses the reaction CMP + ATP = CDP + ADP. The catalysed reaction is dCMP + ATP = dCDP + ADP. The protein is Cytidylate kinase of Clostridium botulinum (strain Okra / Type B1).